A 613-amino-acid chain; its full sequence is tRNA 5-methylaminomethyl-2-thiouridine biosynthesis bifunctional protein MnmC (613 aa).

A tRNA (mnm(5)s(2)U34)-methyltransferase region spans residues 1–225 (MKKAKLIFKD…KREMIKAYLE (225 aa)). The segment at 252–613 (IGAGISSAVL…FLIRKLKKGL (362 aa)) is FAD-dependent cmnm(5)s(2)U34 oxidoreductase.

It in the N-terminal section; belongs to the methyltransferase superfamily. tRNA (mnm(5)s(2)U34)-methyltransferase family. The protein in the C-terminal section; belongs to the DAO family. FAD is required as a cofactor.

Its subcellular location is the cytoplasm. It carries out the reaction 5-aminomethyl-2-thiouridine(34) in tRNA + S-adenosyl-L-methionine = 5-methylaminomethyl-2-thiouridine(34) in tRNA + S-adenosyl-L-homocysteine + H(+). Its function is as follows. Catalyzes the last two steps in the biosynthesis of 5-methylaminomethyl-2-thiouridine (mnm(5)s(2)U) at the wobble position (U34) in tRNA. Catalyzes the FAD-dependent demodification of cmnm(5)s(2)U34 to nm(5)s(2)U34, followed by the transfer of a methyl group from S-adenosyl-L-methionine to nm(5)s(2)U34, to form mnm(5)s(2)U34. This Campylobacter jejuni subsp. jejuni serotype O:2 (strain ATCC 700819 / NCTC 11168) protein is tRNA 5-methylaminomethyl-2-thiouridine biosynthesis bifunctional protein MnmC.